The primary structure comprises 123 residues: Small ribosomal subunit protein uS13 (123 aa).

A disordered region spans residues 94-123 (RRGLPVRGQHTKNNARTRKGPARAIAGKKK).

The protein belongs to the universal ribosomal protein uS13 family. In terms of assembly, part of the 30S ribosomal subunit. Forms a loose heterodimer with protein S19. Forms two bridges to the 50S subunit in the 70S ribosome.

In terms of biological role, located at the top of the head of the 30S subunit, it contacts several helices of the 16S rRNA. In the 70S ribosome it contacts the 23S rRNA (bridge B1a) and protein L5 of the 50S subunit (bridge B1b), connecting the 2 subunits; these bridges are implicated in subunit movement. Contacts the tRNAs in the A and P-sites. The polypeptide is Small ribosomal subunit protein uS13 (Oenococcus oeni (strain ATCC BAA-331 / PSU-1)).